The sequence spans 472 residues: Arabinose-proton symporter (472 aa).

Topologically, residues 1 to 29 (MVTINTESALTPRSLRDTRRMNMFVSVAA) are cytoplasmic. The chain crosses the membrane as a helical span at residues 30–50 (AVAGLLFGLDIGVIAGALPFI). Residues 51-63 (TDHFVLTSRLQEW) are Periplasmic-facing. A helical membrane pass occupies residues 64-84 (VVSSMMLGAAIGALFNGWLSF). The Cytoplasmic portion of the chain corresponds to 85-91 (RLGRKYS). Residues 92-112 (LMAGAILFVLGSIGSAFATSV) traverse the membrane as a helical segment. Topologically, residues 113 to 114 (EM) are periplasmic. A helical membrane pass occupies residues 115–135 (LIAARVVLGIAVGIASYTAPL). Topologically, residues 136–154 (YLSEMASENVRGKMISMYQ) are cytoplasmic. A helical membrane pass occupies residues 155-175 (LMVTLGIVLAFLSDTAFSYSG). Over 176–178 (NWR) the chain is Periplasmic. A helical membrane pass occupies residues 179–199 (AMLGVLALPAVLLIILVVFLP). Residues 200-257 (NSPRWLAEKGRHIEAEEVLRMLRDTSEKAREELNEIRESLKLKQGGWALFKINRNVRR) lie on the Cytoplasmic side of the membrane. A helical membrane pass occupies residues 258–278 (AVFLGMLLQAMQQFTGMNIIM). Over 279–297 (YYAPRIFKMAGFTTTEQQM) the chain is Periplasmic. A helical membrane pass occupies residues 298-318 (IATLVVGLTFMFATFIAVFTV). At 319–325 (DKAGRKP) the chain is on the cytoplasmic side. Residues 326–346 (ALKIGFSVMALGTLVLGYCLM) form a helical membrane-spanning segment. Residues 347 to 361 (QFDNGTASSGLSWLS) lie on the Periplasmic side of the membrane. A helical transmembrane segment spans residues 362–382 (VGMTMMCIAGYAMSAAPVVWI). Topologically, residues 383–404 (LCSEIQPLKCRDFGITCSTTTN) are cytoplasmic. Transmembrane regions (helical) follow at residues 405 to 425 (WVSNMIIGATFLTLLDSIGAA) and 426 to 446 (GTFWLYTALNIAFVGITFWLI). Topologically, residues 447–472 (PETKNVTLEHIERKLMAGEKLRNIGV) are cytoplasmic.

Belongs to the major facilitator superfamily. Sugar transporter (TC 2.A.1.1) family.

Its subcellular location is the cell inner membrane. The catalysed reaction is L-arabinose(in) + H(+)(in) = L-arabinose(out) + H(+)(out). Functionally, uptake of L-arabinose across the cytoplasmic membrane with the concomitant transport of protons into the cell (symport system). The protein is Arabinose-proton symporter (araE) of Escherichia coli O157:H7.